Reading from the N-terminus, the 103-residue chain is Small ribosomal subunit protein uS10 (103 aa).

It belongs to the universal ribosomal protein uS10 family. As to quaternary structure, part of the 30S ribosomal subunit.

Involved in the binding of tRNA to the ribosomes. This chain is Small ribosomal subunit protein uS10, found in Verminephrobacter eiseniae (strain EF01-2).